Reading from the N-terminus, the 40-residue chain is Photosystem II reaction center protein J (40 aa).

A helical membrane pass occupies residues 8–28 (IPLCLIGTVAGIAVIGLVGVF).

Belongs to the PsbJ family. In terms of assembly, PSII is composed of 1 copy each of membrane proteins PsbA, PsbB, PsbC, PsbD, PsbE, PsbF, PsbH, PsbI, PsbJ, PsbK, PsbL, PsbM, PsbT, PsbX, PsbY, PsbZ, Psb30/Ycf12, at least 3 peripheral proteins of the oxygen-evolving complex and a large number of cofactors. It forms dimeric complexes.

It localises to the plastid. It is found in the chloroplast thylakoid membrane. Functionally, one of the components of the core complex of photosystem II (PSII). PSII is a light-driven water:plastoquinone oxidoreductase that uses light energy to abstract electrons from H(2)O, generating O(2) and a proton gradient subsequently used for ATP formation. It consists of a core antenna complex that captures photons, and an electron transfer chain that converts photonic excitation into a charge separation. The sequence is that of Photosystem II reaction center protein J from Triticum aestivum (Wheat).